The sequence spans 335 residues: Glycerol-3-phosphate dehydrogenase [NAD(P)+] (335 aa).

The NADPH site is built by Ser-12, Trp-13, and Lys-107. Sn-glycerol 3-phosphate contacts are provided by Lys-107, Gly-138, and Ser-140. Ala-142 contributes to the NADPH binding site. Lys-193, Asp-246, Ser-256, Arg-257, and Asn-258 together coordinate sn-glycerol 3-phosphate. Lys-193 functions as the Proton acceptor in the catalytic mechanism. Arg-257 provides a ligand contact to NADPH. NADPH contacts are provided by Val-281 and Glu-283.

It belongs to the NAD-dependent glycerol-3-phosphate dehydrogenase family.

It localises to the cytoplasm. The catalysed reaction is sn-glycerol 3-phosphate + NAD(+) = dihydroxyacetone phosphate + NADH + H(+). It catalyses the reaction sn-glycerol 3-phosphate + NADP(+) = dihydroxyacetone phosphate + NADPH + H(+). It participates in membrane lipid metabolism; glycerophospholipid metabolism. Catalyzes the reduction of the glycolytic intermediate dihydroxyacetone phosphate (DHAP) to sn-glycerol 3-phosphate (G3P), the key precursor for phospholipid synthesis. The sequence is that of Glycerol-3-phosphate dehydrogenase [NAD(P)+] from Geobacter sp. (strain M21).